The chain runs to 679 residues: Glycine--tRNA ligase beta subunit (679 aa).

It belongs to the class-II aminoacyl-tRNA synthetase family. As to quaternary structure, tetramer of two alpha and two beta subunits.

Its subcellular location is the cytoplasm. It carries out the reaction tRNA(Gly) + glycine + ATP = glycyl-tRNA(Gly) + AMP + diphosphate. The protein is Glycine--tRNA ligase beta subunit of Streptococcus pyogenes serotype M49 (strain NZ131).